The sequence spans 525 residues: Coronin-2A (525 aa).

5 WD repeats span residues 80–120, 130–170, 178–217, 220–263, and 269–308; these read GHRG…LTKN, GHAR…SVIM, CHQD…VLQE, YKGH…VPVT, and GSSG…PHLN. Residues 485-524 adopt a coiled-coil conformation; that stretch reads QMFYRQQDEIRRLRELVTQREVQAKQLELEIRNLRMNSPR.

The protein belongs to the WD repeat coronin family. In terms of assembly, binds actin. Component of the N-Cor repressor complex, at least composed of NCOR1, NCOR2, HDAC3, TBL1X, TBL1R, CORO2A and GPS2.

This is Coronin-2A (CORO2A) from Bos taurus (Bovine).